Reading from the N-terminus, the 301-residue chain is UDP-3-O-acyl-N-acetylglucosamine deacetylase (301 aa).

Histidine 75, histidine 233, and aspartate 237 together coordinate Zn(2+). The active-site Proton donor is histidine 260.

The protein belongs to the LpxC family. Requires Zn(2+) as cofactor.

The catalysed reaction is a UDP-3-O-[(3R)-3-hydroxyacyl]-N-acetyl-alpha-D-glucosamine + H2O = a UDP-3-O-[(3R)-3-hydroxyacyl]-alpha-D-glucosamine + acetate. Its pathway is glycolipid biosynthesis; lipid IV(A) biosynthesis; lipid IV(A) from (3R)-3-hydroxytetradecanoyl-[acyl-carrier-protein] and UDP-N-acetyl-alpha-D-glucosamine: step 2/6. Functionally, catalyzes the hydrolysis of UDP-3-O-myristoyl-N-acetylglucosamine to form UDP-3-O-myristoylglucosamine and acetate, the committed step in lipid A biosynthesis. The sequence is that of UDP-3-O-acyl-N-acetylglucosamine deacetylase from Aliarcobacter butzleri (strain RM4018) (Arcobacter butzleri).